A 265-amino-acid chain; its full sequence is Sulfur carrier protein FdhD (265 aa).

Catalysis depends on C107, which acts as the Cysteine persulfide intermediate.

This sequence belongs to the FdhD family.

Its subcellular location is the cytoplasm. Functionally, required for formate dehydrogenase (FDH) activity. Acts as a sulfur carrier protein that transfers sulfur from IscS to the molybdenum cofactor prior to its insertion into FDH. The chain is Sulfur carrier protein FdhD from Staphylococcus aureus (strain NCTC 8325 / PS 47).